The following is a 314-amino-acid chain: Ribosomal RNA small subunit methyltransferase H (314 aa).

S-adenosyl-L-methionine-binding positions include 36-38, Asp56, Phe81, Asp103, and Gln110; that span reads GGH.

It belongs to the methyltransferase superfamily. RsmH family.

It localises to the cytoplasm. The catalysed reaction is cytidine(1402) in 16S rRNA + S-adenosyl-L-methionine = N(4)-methylcytidine(1402) in 16S rRNA + S-adenosyl-L-homocysteine + H(+). In terms of biological role, specifically methylates the N4 position of cytidine in position 1402 (C1402) of 16S rRNA. This Shewanella sediminis (strain HAW-EB3) protein is Ribosomal RNA small subunit methyltransferase H.